A 278-amino-acid chain; its full sequence is Methyltransferase GfsG (278 aa).

S-adenosyl-L-methionine is bound by residues Q105 and 128-129 (DA). Catalysis depends on E146, which acts as the Proton acceptor. H150 provides a ligand contact to S-adenosyl-L-methionine.

It belongs to the methyltransferase superfamily.

It participates in antibiotic biosynthesis. Its function is as follows. Methylase required for synthesis of the 16-membered macrolide antibiotics FD-891 and FD-892. In vitro uses S-adenosyl-L-methionine to methylate a number of biosynthetic intermediates in the synthesis of FD-891. In Streptomyces halstedii, this protein is Methyltransferase GfsG.